Here is an 85-residue protein sequence, read N- to C-terminus: Large ribosomal subunit protein bL31B (85 aa).

Belongs to the bacterial ribosomal protein bL31 family. Type B subfamily. In terms of assembly, part of the 50S ribosomal subunit.

This chain is Large ribosomal subunit protein bL31B, found in Porphyromonas gingivalis (strain ATCC 33277 / DSM 20709 / CIP 103683 / JCM 12257 / NCTC 11834 / 2561).